A 257-amino-acid chain; its full sequence is Thiazole synthase (257 aa).

Lys-99 (schiff-base intermediate with DXP) is an active-site residue. Residues Gly-160, 186–187 (AG), and 208–209 (NT) each bind 1-deoxy-D-xylulose 5-phosphate.

This sequence belongs to the ThiG family. In terms of assembly, homotetramer. Forms heterodimers with either ThiH or ThiS.

The protein resides in the cytoplasm. The catalysed reaction is [ThiS sulfur-carrier protein]-C-terminal-Gly-aminoethanethioate + 2-iminoacetate + 1-deoxy-D-xylulose 5-phosphate = [ThiS sulfur-carrier protein]-C-terminal Gly-Gly + 2-[(2R,5Z)-2-carboxy-4-methylthiazol-5(2H)-ylidene]ethyl phosphate + 2 H2O + H(+). The protein operates within cofactor biosynthesis; thiamine diphosphate biosynthesis. Catalyzes the rearrangement of 1-deoxy-D-xylulose 5-phosphate (DXP) to produce the thiazole phosphate moiety of thiamine. Sulfur is provided by the thiocarboxylate moiety of the carrier protein ThiS. In vitro, sulfur can be provided by H(2)S. This chain is Thiazole synthase, found in Thermodesulfovibrio yellowstonii (strain ATCC 51303 / DSM 11347 / YP87).